The chain runs to 279 residues: MSIISPQDVKKLREETNAGFGDCKKALSAAGGDFELAKKKLREMGIASAEKRLDRDAKEGRVFSYSNNIHAGLLLVSCETDFVALNHNFVNFGNSLIKELVESGRNSLATSQELELKNLAATIKENIQVKKIFITEIQSNEFVKIYLHGEQSKIGVLVKLKVDDFSKTEDKMLQDFAMDLALHVAALAPIYLRNDDVCPNYIKEQEEIFAKQLELSGKSESIVKGIVAGKIKKHLAEISLLEQGFVKNDKLTVREMLEEVSKAISSKIEIVEFKYLRIG.

Residues 80–83 are involved in Mg(2+) ion dislocation from EF-Tu; sequence TDFV.

The protein belongs to the EF-Ts family.

The protein resides in the cytoplasm. Functionally, associates with the EF-Tu.GDP complex and induces the exchange of GDP to GTP. It remains bound to the aminoacyl-tRNA.EF-Tu.GTP complex up to the GTP hydrolysis stage on the ribosome. This is Elongation factor Ts from Borreliella afzelii (strain PKo) (Borrelia afzelii).